Reading from the N-terminus, the 186-residue chain is Large ribosomal subunit protein bL17 (186 aa).

The segment at 123–186 (SEADRARRVK…ADEAEGSSED (64 aa)) is disordered. Residues 139 to 177 (EAAAAAPQAAVEPEAVEAAPAPDAPEAAPEAEAAAPQPA) are compositionally biased toward low complexity.

Belongs to the bacterial ribosomal protein bL17 family. Part of the 50S ribosomal subunit. Contacts protein L32.

This chain is Large ribosomal subunit protein bL17, found in Mycobacterium avium (strain 104).